The chain runs to 455 residues: Zinc finger and BTB domain-containing protein 8A.2 (455 aa).

Residues 24 to 92 (CDCHIMIDGH…MYSGKLNLSG (69 aa)) enclose the BTB domain. 2 consecutive C2H2-type zinc fingers follow at residues 299–321 (FKCPFCTHTVKRKADLKRHLLCH) and 327–350 (YPCQACGKRFTRLEHVRSHYRTIH).

The protein localises to the nucleus. In terms of biological role, may be involved in transcriptional regulation. The sequence is that of Zinc finger and BTB domain-containing protein 8A.2 (zbtb8a.2) from Xenopus tropicalis (Western clawed frog).